The chain runs to 63 residues: MSKEVLEKELFEMLDEDVRELLSLIHEIKIDRITGNMDKQKLGKAYFQVQKIEAELYQLIKVS.

As to quaternary structure, homodimer.

This protein may be involved in virus assembly. This Saccharolobus solfataricus (Sulfolobus solfataricus) protein is Protein D-63.